The sequence spans 251 residues: 2,3-bisphosphoglycerate-dependent phosphoglycerate mutase (251 aa).

Substrate-binding positions include 8-15 (RHGESLWN), 21-22 (TG), Arg60, 87-90 (ERHY), Lys98, 114-115 (RR), and 183-184 (GN). His9 (tele-phosphohistidine intermediate) is an active-site residue. Glu87 serves as the catalytic Proton donor/acceptor.

The protein belongs to the phosphoglycerate mutase family. BPG-dependent PGAM subfamily.

It carries out the reaction (2R)-2-phosphoglycerate = (2R)-3-phosphoglycerate. It functions in the pathway carbohydrate degradation; glycolysis; pyruvate from D-glyceraldehyde 3-phosphate: step 3/5. In terms of biological role, catalyzes the interconversion of 2-phosphoglycerate and 3-phosphoglycerate. The polypeptide is 2,3-bisphosphoglycerate-dependent phosphoglycerate mutase (Thermoanaerobacter pseudethanolicus (strain ATCC 33223 / 39E) (Clostridium thermohydrosulfuricum)).